The primary structure comprises 3001 residues: BEACH domain-containing protein C2 (3001 aa).

Disordered stretches follow at residues 43-80, 103-156, 1018-1076, 1846-1868, 2039-2071, 2101-2132, and 2193-2212; these read DFEQ…SSFG, DVQS…KATV, NVLA…NVGS, TFSS…PRDK, YSGT…SNPP, AEEH…RTSN, and NLAD…DRSW. Residue Ser48 is modified to Phosphoserine. 3 stretches are compositionally biased toward polar residues: residues 57–72, 121–132, and 1037–1050; these read NESQ…FSNS, SMQQSLSETSLD, and SPYN…QLDS. The segment covering 1854–1863 has biased composition (pro residues); that stretch reads LEPPNNNAPP. The span at 2101–2119 shows a compositional bias: basic and acidic residues; the sequence is AEEHKRDEGRISGSHEHAS. The span at 2120-2129 shows a compositional bias: polar residues; it reads RTSAGNSDPR. The BEACH-type PH domain maps to 2151–2260; sequence ELDERILLEL…GRRNAYRAIV (110 aa). Over residues 2196–2211 the composition is skewed to basic and acidic residues; sequence DHSDESQSGDQEKDRS. One can recognise a BEACH domain in the interval 2275-2564; sequence QRPEQLLRRT…QLLTVPHMKR (290 aa). WD repeat units lie at residues 2679–2718, 2721–2760, 2802–2841, 2842–2881, and 2953–2992; these read SGIR…TLET, GHCA…TSRT, GHRR…LIRR, LVGV…IAKA, and GQGQ…LKVV.

This Arabidopsis thaliana (Mouse-ear cress) protein is BEACH domain-containing protein C2.